A 316-amino-acid polypeptide reads, in one-letter code: uncharacterized protein (316 aa).

It belongs to the asfivirus F317L family.

The protein localises to the virion. This is an uncharacterized protein from Ornithodoros (relapsing fever ticks).